The sequence spans 197 residues: Imidazoleglycerol-phosphate dehydratase (197 aa).

The protein belongs to the imidazoleglycerol-phosphate dehydratase family.

It is found in the cytoplasm. The catalysed reaction is D-erythro-1-(imidazol-4-yl)glycerol 3-phosphate = 3-(imidazol-4-yl)-2-oxopropyl phosphate + H2O. It functions in the pathway amino-acid biosynthesis; L-histidine biosynthesis; L-histidine from 5-phospho-alpha-D-ribose 1-diphosphate: step 6/9. The polypeptide is Imidazoleglycerol-phosphate dehydratase (Pseudomonas entomophila (strain L48)).